Here is a 432-residue protein sequence, read N- to C-terminus: Anaerobic glycerol-3-phosphate dehydrogenase subunit B (432 aa).

The protein belongs to the anaerobic G-3-P dehydrogenase subunit B family. As to quaternary structure, composed of a catalytic GlpA/B dimer and of membrane bound GlpC. The cofactor is FMN.

The catalysed reaction is a quinone + sn-glycerol 3-phosphate = dihydroxyacetone phosphate + a quinol. It participates in polyol metabolism; glycerol degradation via glycerol kinase pathway; glycerone phosphate from sn-glycerol 3-phosphate (anaerobic route): step 1/1. In terms of biological role, conversion of glycerol 3-phosphate to dihydroxyacetone. Uses fumarate or nitrate as electron acceptor. In Histophilus somni (strain 129Pt) (Haemophilus somnus), this protein is Anaerobic glycerol-3-phosphate dehydrogenase subunit B.